Consider the following 322-residue polypeptide: ATP-dependent 6-phosphofructokinase (322 aa).

An ATP-binding site is contributed by G11. 21-25 (RAVTR) is a binding site for ADP. Residues 72-73 (RC) and 102-105 (GDGS) contribute to the ATP site. D103 is a binding site for Mg(2+). Residue 127-129 (TID) participates in substrate binding. D129 functions as the Proton acceptor in the catalytic mechanism. Residue R156 participates in ADP binding. Substrate-binding positions include R164 and 171 to 173 (MGR). ADP-binding positions include 187 to 189 (GAE), R213, and 215 to 217 (KKH). Residues E224, R245, and 251 to 254 (HIQR) each bind substrate.

Belongs to the phosphofructokinase type A (PFKA) family. ATP-dependent PFK group I subfamily. Prokaryotic clade 'B1' sub-subfamily. In terms of assembly, homotetramer. Requires Mg(2+) as cofactor.

It localises to the cytoplasm. It carries out the reaction beta-D-fructose 6-phosphate + ATP = beta-D-fructose 1,6-bisphosphate + ADP + H(+). Its pathway is carbohydrate degradation; glycolysis; D-glyceraldehyde 3-phosphate and glycerone phosphate from D-glucose: step 3/4. Its activity is regulated as follows. Allosterically activated by ADP and other diphosphonucleosides, and allosterically inhibited by phosphoenolpyruvate. Catalyzes the phosphorylation of D-fructose 6-phosphate to fructose 1,6-bisphosphate by ATP, the first committing step of glycolysis. The protein is ATP-dependent 6-phosphofructokinase of Staphylococcus epidermidis (strain ATCC 12228 / FDA PCI 1200).